We begin with the raw amino-acid sequence, 1001 residues long: E3 ubiquitin-protein ligase BRE1B (1001 aa).

The tract at residues 1–31 (MSGLGNKRAAGDGGSGPPEKKLSREEKTTTT) is disordered. A compositionally biased stretch (basic and acidic residues) spans 18–28 (PEKKLSREEKT). Lysine 20 is modified (N6-acetyllysine). Serine 42 is subject to Phosphoserine. A coiled-coil region spans residues 45–91 (EEIDLKVLQFKNKKLAERLEQRQACEDELRERIEKLEKRQATDDATL). A disordered region spans residues 116–149 (GELSSAPEAPGTQEGPTCDGTPLPEPGTSELREP). 2 coiled-coil regions span residues 228–377 (ARTR…LRSL) and 437–523 (LQKK…AQTS). N6-acetyllysine occurs at positions 355 and 517. Positions 516–646 (GKLRAQTSGS…EKAKVEEAKR (131 aa)) are disordered. A compositionally biased stretch (polar residues) spans 520–531 (AQTSGSTHSTPN). Serine 528 is modified (phosphoserine). Residues lysine 578 and lysine 579 each participate in a glycyl lysine isopeptide (Lys-Gly) (interchain with G-Cter in SUMO2) cross-link. A Phosphoserine modification is found at serine 585. Basic and acidic residues-rich tracts occupy residues 602 to 619 (RGRE…EREG) and 633 to 646 (RADR…EAKR). Positions 627 to 946 (VASALSRADR…EEIKEYKARL (320 aa)) form a coiled coil. The segment at 948-987 (CPCCNTRKKDAVLTKCFHVFCFECVRGRYEARQRKCPKCN) adopts an RING-type zinc-finger fold.

The protein belongs to the BRE1 family. In terms of assembly, component of the RNF20/40 complex (also known as BRE1 complex) probably composed of 2 copies of RNF20/BRE1A and 2 copies of RNF40/BRE1B. Interacts with UBE2E1/UBCH6. Interacts with RB1 and WAC.

The protein localises to the nucleus. It carries out the reaction S-ubiquitinyl-[E2 ubiquitin-conjugating enzyme]-L-cysteine + [acceptor protein]-L-lysine = [E2 ubiquitin-conjugating enzyme]-L-cysteine + N(6)-ubiquitinyl-[acceptor protein]-L-lysine.. It participates in protein modification; protein ubiquitination. In terms of biological role, component of the RNF20/40 E3 ubiquitin-protein ligase complex that mediates monoubiquitination of 'Lys-120' of histone H2B (H2BK120ub1). H2BK120ub1 gives a specific tag for epigenetic transcriptional activation and is also prerequisite for histone H3 'Lys-4' and 'Lys-79' methylation (H3K4me and H3K79me, respectively). It thereby plays a central role in histone code and gene regulation. The RNF20/40 complex forms a H2B ubiquitin ligase complex in cooperation with the E2 enzyme UBE2A or UBE2B; reports about the cooperation with UBE2E1/UBCH are contradictory. Required for transcriptional activation of Hox genes. This Macaca fascicularis (Crab-eating macaque) protein is E3 ubiquitin-protein ligase BRE1B (RNF40).